A 188-amino-acid chain; its full sequence is MATNHVLASQLPVNTKSSEIPLQSGTPPPTIIYPFQIEMASLGTADASDSISIASNSLLASVTTLYRHAKLTSLKATIHPTGQAPAFPTTVALAWVPYNSTATSAQILSVYGGQMFCIGGSINSLSPIDVPCNLTNVNPIIKDSVTYSDTPKLLLYSIAQETAPTLATCSVTITGTLTLHSPLLQATA.

This sequence belongs to the tymoviruses capsid protein family.

The protein resides in the virion. Functionally, self-assembles to form a T=3 icosahedral capsid composed of 180 copies of the capsid protein. The capsid encapsulates the single-stranded RNA genome. The chain is Capsid protein from Kennedya yellow mosaic virus (strain Jervis bay) (KYMV).